The following is a 270-amino-acid chain: Probable aquaporin NIP-type (270 aa).

Helical transmembrane passes span 45–65 (LIAE…SVAV) and 72–92 (VTFP…VYTV). Positions 101–103 (NPA) match the NPA 1 motif. Helical transmembrane passes span 121-141 (LYII…ALLF), 160-180 (SLAI…GVAT), and 188-208 (VAGI…GPIS). The short motif at 213–215 (NPA) is the NPA 2 element. Residues 231–251 (WVYVVGPIIGTLAGAFVYNLI) traverse the membrane as a helical segment.

The protein belongs to the MIP/aquaporin (TC 1.A.8) family. NIP (TC 1.A.8.12) subfamily. Pollen specific.

It localises to the membrane. Aquaporins facilitate the transport of water and small neutral solutes across cell membranes. The polypeptide is Probable aquaporin NIP-type (Nicotiana alata (Winged tobacco)).